The primary structure comprises 38 residues: Potassium channel toxin alpha-KTx 3.7 (38 aa).

Disulfide bonds link Cys-8–Cys-28, Cys-14–Cys-33, and Cys-18–Cys-35.

It belongs to the short scorpion toxin superfamily. Potassium channel inhibitor family. Alpha-KTx 03 subfamily. As to expression, expressed by the venom gland.

It localises to the secreted. Its function is as follows. Blocks voltage-gated potassium channels Kv1.1/KCNA1 (IC(50)=0.6 nM), Kv1.2/KCNA2 (IC(50)=5.4 nM), Kv1.3/KCNA3 (IC(50)=0.014 nM) potently, and moderately block intermediate conductance calcium-activated potassium channels KCa3.1/KCNN4 (IC(50)=225 nM). Also shows activity on muscle-type nicotinic acetylcholine receptor (nAChR), since it reversibly and dose-dependently inhibits acetylcholine-induced current through mouse muscle-type nAChR heterologously expressed in Xenopus oocytes (IC(50)=1.6 uM). The polypeptide is Potassium channel toxin alpha-KTx 3.7 (Orthochirus scrobiculosus (Central Asian scorpion)).